A 160-amino-acid polypeptide reads, in one-letter code: Large ribosomal subunit protein uL15 (160 aa).

Positions 1-11 (MKLNELRDNHG) are enriched in basic and acidic residues. The disordered stretch occupies residues 1 to 39 (MKLNELRDNHGARPKSKRLGRGIGSGKGKTSGKGVKGQK). Residues 21–35 (RGIGSGKGKTSGKGV) show a composition bias toward gly residues.

It belongs to the universal ribosomal protein uL15 family. In terms of assembly, part of the 50S ribosomal subunit.

Binds to the 23S rRNA. This chain is Large ribosomal subunit protein uL15, found in Granulibacter bethesdensis (strain ATCC BAA-1260 / CGDNIH1).